A 343-amino-acid chain; its full sequence is tRNA N6-adenosine threonylcarbamoyltransferase (343 aa).

Fe cation-binding residues include H108 and H112. Substrate contacts are provided by residues 129-133 (LISGG), D161, E178, and S258. D286 is a Fe cation binding site.

The protein belongs to the KAE1 / TsaD family. Fe(2+) is required as a cofactor.

Its subcellular location is the cytoplasm. It catalyses the reaction L-threonylcarbamoyladenylate + adenosine(37) in tRNA = N(6)-L-threonylcarbamoyladenosine(37) in tRNA + AMP + H(+). Its function is as follows. Required for the formation of a threonylcarbamoyl group on adenosine at position 37 (t(6)A37) in tRNAs that read codons beginning with adenine. Is probably involved in the transfer of the threonylcarbamoyl moiety of threonylcarbamoyl-AMP (TC-AMP) to the N6 group of A37. The protein is tRNA N6-adenosine threonylcarbamoyltransferase of Pyrobaculum aerophilum (strain ATCC 51768 / DSM 7523 / JCM 9630 / CIP 104966 / NBRC 100827 / IM2).